Here is a 434-residue protein sequence, read N- to C-terminus: Serine hydroxymethyltransferase (434 aa).

Residues leucine 128 and 132–134 each bind (6S)-5,6,7,8-tetrahydrofolate; that span reads GHL. N6-(pyridoxal phosphate)lysine is present on lysine 237.

This sequence belongs to the SHMT family. As to quaternary structure, homodimer. The cofactor is pyridoxal 5'-phosphate.

It is found in the cytoplasm. It catalyses the reaction (6R)-5,10-methylene-5,6,7,8-tetrahydrofolate + glycine + H2O = (6S)-5,6,7,8-tetrahydrofolate + L-serine. The protein operates within one-carbon metabolism; tetrahydrofolate interconversion. It participates in amino-acid biosynthesis; glycine biosynthesis; glycine from L-serine: step 1/1. In terms of biological role, catalyzes the reversible interconversion of serine and glycine with tetrahydrofolate (THF) serving as the one-carbon carrier. This reaction serves as the major source of one-carbon groups required for the biosynthesis of purines, thymidylate, methionine, and other important biomolecules. Also exhibits THF-independent aldolase activity toward beta-hydroxyamino acids, producing glycine and aldehydes, via a retro-aldol mechanism. This Corynebacterium efficiens (strain DSM 44549 / YS-314 / AJ 12310 / JCM 11189 / NBRC 100395) protein is Serine hydroxymethyltransferase.